The following is a 182-amino-acid chain: NADH-dependent FAD reductase (182 aa).

D16 is an NAD(+) binding site. FAD is bound by residues 47–48 (NS), 62–64 (CVG), and H98. H143 is an NAD(+) binding site.

The protein belongs to the non-flavoprotein flavin reductase family. As to quaternary structure, homodimer.

It catalyses the reaction FADH2 + NAD(+) = FAD + NADH + 2 H(+). It participates in antibiotic biosynthesis. Its activity is regulated as follows. The SgcE6-SgcC hydroxylation activity decreases in the presence of excess FAD. In terms of biological role, reductase component of a two-component system involved in the biosynthesis of the enediyne antitumor antibiotic C-1027. SgcE6 provides the FADH(2) required by both the halogenase SgcC3 and the monooxygenase SgcC through free diffusion. Accepts only NADH and FAD as substrates. The protein is NADH-dependent FAD reductase of Streptomyces globisporus.